Here is a 66-residue protein sequence, read N- to C-terminus: DNA gyrase inhibitor YacG (66 aa).

Zn(2+) contacts are provided by cysteine 9, cysteine 12, cysteine 28, and cysteine 32.

It belongs to the DNA gyrase inhibitor YacG family. In terms of assembly, interacts with GyrB. Requires Zn(2+) as cofactor.

Its function is as follows. Inhibits all the catalytic activities of DNA gyrase by preventing its interaction with DNA. Acts by binding directly to the C-terminal domain of GyrB, which probably disrupts DNA binding by the gyrase. The polypeptide is DNA gyrase inhibitor YacG (Pseudomonas aeruginosa (strain LESB58)).